A 1114-amino-acid polypeptide reads, in one-letter code: MADGPRCKRRKQANPRRNNVTNYNNVIEANSDSDDEDKLHIVEEESITDAADCDASVPEDDLPTDHTVLPENSEREGSTNSCWEDEGKETKEILGPEAQSDEVGCTVKEDECDSDAENEQNHDPNVEEFLQQEDTAVIYPEAPEEDQRQGTPEASGQDENGTPDAFSQLLTCPYCDRGYKRFTSLKEHIKYRHEKNEDNFSCSLCSYTFAYRTQLDRHMTSHKSGRDQRHVTQSSGNRKFKCTECGKAFKYKHHLKEHLRIHSGEKPYECPNCKKRFSHSGSYSSHISSKKCIGLMPVKGRARSGLKTSQCSSPSLSASPGSPARPQIRQKIENKPLQEQLPVNQIKTEPVDYEFKPIVVASGINCSTPLQNGVFSGGSPLQATSSPQGVVQAVVLPTVGLVSPISINLSDIQNVLKVAVDGNVIRQVLENNHANLASKEQETISNASIQQAGHSLISAISLPLVDQDGTTKIIINYSLEQPSQLQVVPQNLKKEHSVPTNSCKNEKLPEDLTVKSEKDKNFEGETNDSTCLLCDDCPGDLNALQELKHYETKNPPQLPQSSGTEAEKPSSPAPSETGENNLSPGQPPLKNLLSLLKAYYALNAQPSAEELSKIADSVNLPLDVVKKWFEKMQAGQISVQSSGPSSPEQVKISSPTDNDDQAATTNESEPQNSTNNSQNPANTSKSQTSSGGSTQNGSRSSTPSPSPLNLSSSRNSQGYTYTAEGVQEEPQMEPLDLSLPKQHGELLERSTITSVYQNSVYSVQEEPLNLTCAKKEPQKDNSITDSDPIVNVIPPSANPINIAIPTVTAQLPTIVAIADQNSVPCLRALAANKQTILIPQVAYTYSTTVSPAVQETPPKQTQANGSQDERQDTSSEGVSNVEDQNDSDSTPPKKKMRKTENGMYACDLCDKIFQKSSSLLRHKYEHTGKRPHECGICKKAFKHKHHLIEHMRLHSGEKPYQCDKCGKRFSHSGSYSQHMNHRYSYCKREAEERDSTEQEEVGQEVLSSEHAGARASPSQIDSDERESLTREEEEDSEKEEEEEEEKDVEGLQEEKECRKLQDVEEEEEVEEEEEEEEGKTEGNKNDDVVNRASNAEPEVIQSNGQVSEEKTNKA.

Disordered stretches follow at residues 1 to 105 and 142 to 163; these read MADG…EVGC and APEE…NGTP. Residues 15–30 show a composition bias toward low complexity; the sequence is PRRNNVTNYNNVIEAN. Residues 149–160 show a composition bias toward polar residues; sequence QGTPEASGQDEN. 3 consecutive C2H2-type zinc fingers follow at residues 170-193, 200-222, and 240-262; these read LTCP…KYRH, FSCS…MTSH, and FKCT…LRIH. The segment at 268–292 adopts a C2H2-type 4; atypical zinc-finger fold; the sequence is YECPNCKKRFSHSGSYSSHISSKKC. Disordered regions lie at residues 304-326, 491-529, 553-588, and 636-716; these read SGLK…PARP, NLKK…TNDS, KNPP…GQPP, and QISV…SRNS. A compositionally biased stretch (low complexity) spans 309–326; it reads SQCSSPSLSASPGSPARP. The segment covering 504–523 has biased composition (basic and acidic residues); the sequence is KNEKLPEDLTVKSEKDKNFE. 2 stretches are compositionally biased toward polar residues: residues 573–584 and 636–681; these read APSETGENNLSP and QISV…QNPA. The segment at residues 581-640 is a DNA-binding region (homeobox; atypical); that stretch reads NLSPGQPPLKNLLSLLKAYYALNAQPSAEELSKIADSVNLPLDVVKKWFEKMQAGQISVQ. Residues 682–716 show a composition bias toward low complexity; it reads NTSKSQTSSGGSTQNGSRSSTPSPSPLNLSSSRNS. A CTBP-binding motif motif is present at residues 767-771; sequence PLNLT. Composition is skewed to polar residues over residues 852–866 and 874–890; these read AVQE…ANGS and SSEG…SDST. The disordered stretch occupies residues 852-898; sequence AVQETPPKQTQANGSQDERQDTSSEGVSNVEDQNDSDSTPPKKKMRK. 2 C2H2-type zinc fingers span residues 904-926 and 932-954; these read YACD…KYEH and HECG…MRLH. A C2H2-type 7; atypical zinc finger spans residues 960-981; that stretch reads YQCDKCGKRFSHSGSYSQHMNH. Residues 989–1114 form a disordered region; sequence EAEERDSTEQ…QVSEEKTNKA (126 aa). Residues 1031-1047 are compositionally biased toward acidic residues; that stretch reads EEEEDSEKEEEEEEEKD. The span at 1048–1062 shows a compositional bias: basic and acidic residues; that stretch reads VEGLQEEKECRKLQD. Residues 1063 to 1078 show a composition bias toward acidic residues; that stretch reads VEEEEEVEEEEEEEEG. The segment covering 1079 to 1089 has biased composition (basic and acidic residues); it reads KTEGNKNDDVV.

This sequence belongs to the delta-EF1/ZFH-1 C2H2-type zinc-finger family. As to expression, expression is developmentally regulated with high expression in mesoderm, nervous system and lens.

Its subcellular location is the nucleus. Functionally, acts as a transcriptional repressor. Positively regulates neuronal differentiation. Represses transcription by binding to the E box-containing promoter. Binds to delta 1-crystallin enhancer core and represses lens-specific transcription. It also binds many other non-lens specific DNA sequences. The polypeptide is Zinc finger E-box-binding homeobox 1 (ZEB1) (Gallus gallus (Chicken)).